Consider the following 121-residue polypeptide: Small ribosomal subunit protein uS12c (121 aa).

The protein belongs to the universal ribosomal protein uS12 family. As to quaternary structure, part of the 30S ribosomal subunit.

It is found in the plastid. Its subcellular location is the chloroplast. With S4 and S5 plays an important role in translational accuracy. Located at the interface of the 30S and 50S subunits. This chain is Small ribosomal subunit protein uS12c (rps12), found in Bigelowiella natans (Pedinomonas minutissima).